The sequence spans 270 residues: NADPH-dependent 7-cyano-7-deazaguanine reductase (270 aa).

79 to 81 (IES) lines the substrate pocket. 81 to 82 (SK) is a binding site for NADPH. Catalysis depends on cysteine 177, which acts as the Thioimide intermediate. Aspartate 184 functions as the Proton donor in the catalytic mechanism. A substrate-binding site is contributed by 216–217 (HE). 245–246 (RG) is a binding site for NADPH.

It belongs to the GTP cyclohydrolase I family. QueF type 2 subfamily. Homodimer.

It is found in the cytoplasm. The enzyme catalyses 7-aminomethyl-7-carbaguanine + 2 NADP(+) = 7-cyano-7-deazaguanine + 2 NADPH + 3 H(+). It participates in tRNA modification; tRNA-queuosine biosynthesis. In terms of biological role, catalyzes the NADPH-dependent reduction of 7-cyano-7-deazaguanine (preQ0) to 7-aminomethyl-7-deazaguanine (preQ1). This is NADPH-dependent 7-cyano-7-deazaguanine reductase from Acinetobacter baumannii (strain AB307-0294).